The primary structure comprises 265 residues: Ribosomal RNA small subunit methyltransferase G (265 aa).

Residues G75, L80, and R145 each coordinate S-adenosyl-L-methionine. Positions R212–T265 are disordered. Residues T220–P257 show a composition bias toward basic and acidic residues.

This sequence belongs to the methyltransferase superfamily. RNA methyltransferase RsmG family.

It localises to the cytoplasm. Specifically methylates the N7 position of guanine in position 518 of 16S rRNA. The chain is Ribosomal RNA small subunit methyltransferase G from Frankia casuarinae (strain DSM 45818 / CECT 9043 / HFP020203 / CcI3).